Consider the following 434-residue polypeptide: Forkhead box protein A2 (434 aa).

The segment at residues Lys149–Lys243 is a DNA-binding region (fork-head). The segment covering Lys249 to Ser262 has biased composition (basic and acidic residues). Residues Lys249–Leu339 form a disordered region. 2 stretches are compositionally biased toward low complexity: residues Glu263–Pro291 and Ala317–His333.

The protein resides in the nucleus. In terms of biological role, acts as a transcriptional activator during early development, limiting the extent of mesoderm formation in the gastrula. Binds to DNA via the target sequence 5'-GT[AC]AACA-3', with 5'-GTAAACA-3' being the preferred binding site. This is Forkhead box protein A2 from Xenopus tropicalis (Western clawed frog).